The chain runs to 286 residues: MTSITHTISEIQKLTRQAISDARPVVLIPTMGALHEGHLSLVDTAYSLELDNPFVIMSIFVNPLQFAAGEDLDSYPRTLDADAAKLATHNHQVHAIFAPSPAEMYPLGPRTTITPGAAALRFEGATRPTHFAGVLTVVNKLFQITQCQHAIFGEKDFQQLALIRQMVADFNLPVHVHGSPLMRDHDGVALSSRNAYLSDTERVEARRISAALRQAAMFHVKHDIIAAAINAMAGMDIDYIDVVAPDFSEPTAGNELYGDARIITAVKVGSTRLLDNMAVNVEKPNA.

Residue methionine 31 to histidine 38 participates in ATP binding. Residue histidine 38 is the Proton donor of the active site. Glutamine 65 lines the (R)-pantoate pocket. Glutamine 65 contributes to the beta-alanine binding site. Glycine 153–aspartate 156 contacts ATP. (R)-pantoate is bound at residue glutamine 159. Leucine 190 to arginine 193 serves as a coordination point for ATP.

It belongs to the pantothenate synthetase family. Homodimer.

The protein resides in the cytoplasm. The catalysed reaction is (R)-pantoate + beta-alanine + ATP = (R)-pantothenate + AMP + diphosphate + H(+). The protein operates within cofactor biosynthesis; (R)-pantothenate biosynthesis; (R)-pantothenate from (R)-pantoate and beta-alanine: step 1/1. Its function is as follows. Catalyzes the condensation of pantoate with beta-alanine in an ATP-dependent reaction via a pantoyl-adenylate intermediate. The polypeptide is Pantothenate synthetase (Corynebacterium diphtheriae (strain ATCC 700971 / NCTC 13129 / Biotype gravis)).